The chain runs to 633 residues: MHGLLLAGLLALPMNVLAHPAEQHASNVLSRRGVDIESFRLPLKAKYMDSDAAAQKIQAMSFSKDDDYVSTATKLVKSTFPKSTFRVVDDHYTGTNGIGHVHFKQTAHGLDIDNSDFNVNIDRDGKVFSFGNSFFTGEIPKENPMVKRAFSDPVKALKGAVKALNLPVKSDNAKAKTTAGKESFEFMGTTGALSAPKANLVYLQKEDGTLALTWRVETDVGDNWLLTYVDAHNSETVHNVVDYVASAEFKVFAWGLNDPTEGNPTSIRDPWTDSSPYTWHSDGMTKYPTTRGNNAIAQDNPTGGSTYINNYRPQSPNLIFNYPWSPTATPPSSYKDFSITQLFYTTNRFHDLLYSFGFNEAAGNFQVNNGNKGGRGNDFAIVNAQDGSGTNNANFATPPDGSPGRMRMYNWTTARPNRDGCLEAGIVIHEYAHGLSNRLCGGPANSGCLNALESGGMGEGWGDFYATAIRLKPRDTKDTNYSMGAWAANNPKGIRAYLYSTNLQTNPYMYTSVNSLREVHQIGTVWATMLYDLMWALIEAHGGTYSANPVFRNGVPQDGRHLAMKLVMDGMALQPCNPNFVQARDAILDADRALTNSANKCTIWKAFAKRGLGYGAKYDARNRTGSNRLPPGC.

A signal peptide spans 1–18 (MHGLLLAGLLALPMNVLA). Positions 19–246 (HPAEQHASNV…VHNVVDYVAS (228 aa)) are excised as a propeptide. A glycan (N-linked (GlcNAc...) asparagine) is linked at Asn-410. Residue His-429 coordinates Zn(2+). The active site involves Glu-430. A Zn(2+)-binding site is contributed by His-433. Asn-480 and Asn-622 each carry an N-linked (GlcNAc...) asparagine glycan.

The protein belongs to the peptidase M36 family. The cofactor is Zn(2+).

Its subcellular location is the secreted. Functionally, secreted metalloproteinase probably acting as a virulence factor. This Trichophyton equinum (Horse ringworm fungus) protein is Extracellular metalloproteinase 3 (MEP3).